We begin with the raw amino-acid sequence, 379 residues long: Lipid-A-disaccharide synthase (379 aa).

The protein belongs to the LpxB family.

It carries out the reaction a lipid X + a UDP-2-N,3-O-bis[(3R)-3-hydroxyacyl]-alpha-D-glucosamine = a lipid A disaccharide + UDP + H(+). Its pathway is bacterial outer membrane biogenesis; LPS lipid A biosynthesis. In terms of biological role, condensation of UDP-2,3-diacylglucosamine and 2,3-diacylglucosamine-1-phosphate to form lipid A disaccharide, a precursor of lipid A, a phosphorylated glycolipid that anchors the lipopolysaccharide to the outer membrane of the cell. The polypeptide is Lipid-A-disaccharide synthase (Persephonella marina (strain DSM 14350 / EX-H1)).